Reading from the N-terminus, the 305-residue chain is Mitochondrial thiamine pyrophosphate carrier 1 (305 aa).

6 helical membrane passes run 16-32 (VSPY…GAVA), 84-100 (ILYV…YSSI), 122-142 (LVSG…FDLL), 169-193 (GFTG…LMFW), 213-229 (ICGF…TFPL), and 270-287 (GFGI…VSLF). Solcar repeat units lie at residues 16 to 103 (VSPY…ISRW), 116 to 201 (PSSA…VRET), and 206 to 295 (DIPF…SLAA).

It belongs to the mitochondrial carrier (TC 2.A.29) family.

Its subcellular location is the mitochondrion inner membrane. Its function is as follows. Mitochondrial transporter that mediates uptake of thiamine pyrophosphate (ThPP) into mitochondria. The sequence is that of Mitochondrial thiamine pyrophosphate carrier 1 (TPC1) from Scheffersomyces stipitis (strain ATCC 58785 / CBS 6054 / NBRC 10063 / NRRL Y-11545) (Yeast).